The sequence spans 88 residues: Probable Fe(2+)-trafficking protein (88 aa).

The protein belongs to the Fe(2+)-trafficking protein family.

Could be a mediator in iron transactions between iron acquisition and iron-requiring processes, such as synthesis and/or repair of Fe-S clusters in biosynthetic enzymes. The sequence is that of Probable Fe(2+)-trafficking protein from Alkalilimnicola ehrlichii (strain ATCC BAA-1101 / DSM 17681 / MLHE-1).